The primary structure comprises 265 residues: Eukaryotic translation initiation factor 3 subunit J (265 aa).

Residues 1 to 71 (MSWDDEAING…KESSADRALL (71 aa)) are disordered. The segment covering 23-32 (WDAEIGDDEP) has biased composition (acidic residues). The span at 42 to 71 (EEKKPAPKPKKEQPKKVKKGKESSADRALL) shows a compositional bias: basic and acidic residues. The residue at position 65 (Ser65) is a Phosphoserine. Thr75 carries the post-translational modification Phosphothreonine. Ser92 bears the Phosphoserine mark. The tract at residues 219–265 (VRGGTATGGAGKKKVKGKTNLGGAFKKDQDFDLDGPDDFEFGDDDFM) is disordered. Arg220 carries the omega-N-methylarginine modification. Residues 249–265 (FDLDGPDDFEFGDDDFM) are compositionally biased toward acidic residues.

It belongs to the eIF-3 subunit J family. Probable component of the eukaryotic translation initiation factor 3 (eIF-3) complex. Is not part of the eIF-3 core complex, with which it is associated in substochiometric amounts.

The protein localises to the cytoplasm. Component of the eukaryotic translation initiation factor 3 (eIF-3) complex, which is involved in protein synthesis of a specialized repertoire of mRNAs and, together with other initiation factors, stimulates binding of mRNA and methionyl-tRNAi to the 40S ribosome. The eIF-3 complex specifically targets and initiates translation of a subset of mRNAs involved in cell proliferation. This Saccharomyces cerevisiae (strain ATCC 204508 / S288c) (Baker's yeast) protein is Eukaryotic translation initiation factor 3 subunit J.